A 464-amino-acid chain; its full sequence is Non-neuronal cytoplasmic intermediate filament protein (464 aa).

A compositionally biased stretch (polar residues) spans 1–14 (MSTQTKKVTRTIIT). The disordered stretch occupies residues 1-59 (MSTQTKKVTRTIITSSSGGGGGGGGGRASYSSSGRFSGGGGRMRAGGVTSRRSVGSSYS). Positions 1 to 101 (MSTQTKKVTR…RMTRAHEKQE (101 aa)) are head. The segment covering 17–27 (SGGGGGGGGGR) has biased composition (gly residues). Positions 45 to 59 (AGGVTSRRSVGSSYS) are enriched in low complexity. In terms of domain architecture, IF rod spans 98 to 413 (EKQELSHLND…KLLEGEEIRL (316 aa)). The segment at 102–133 (LSHLNDRFASYIDKVRYLQERNSKLEAQIKIQ) is coil 1A. Positions 134–144 (ESREAPNIKDL) are linker 1. The tract at residues 145–237 (YEKELRDLRA…FLKRVHDEEI (93 aa)) is coil 1B. The linker 2 stretch occupies residues 238-264 (RQLQDQLNESLTIVEVDSRAASTFAPG). The tract at residues 265–413 (PDLTEALREI…KLLEGEEIRL (149 aa)) is coil 2. Positions 414–464 (FGESKEGVQQTSSSSSSSYQYSMKSGSGGGGGGSSSGKQQVTVSVSSGEEK) are tail. The disordered stretch occupies residues 415 to 464 (GESKEGVQQTSSSSSSSYQYSMKSGSGGGGGGSSSGKQQVTVSVSSGEEK). Low complexity predominate over residues 420-438 (GVQQTSSSSSSSYQYSMKS). Residues 439 to 448 (GSGGGGGGSS) show a composition bias toward gly residues. Residues 449–464 (SGKQQVTVSVSSGEEK) are compositionally biased toward low complexity.

It belongs to the intermediate filament family. Can form homopolymers.

The protein resides in the cytoplasm. This is Non-neuronal cytoplasmic intermediate filament protein from Branchiostoma lanceolatum (Common lancelet).